The following is a 160-amino-acid chain: Cyclic pyranopterin monophosphate synthase (160 aa).

Residues 77–79 (MCH) and 114–115 (ME) each bind substrate. The active site involves aspartate 129.

The protein belongs to the MoaC family. In terms of assembly, homohexamer; trimer of dimers.

The catalysed reaction is (8S)-3',8-cyclo-7,8-dihydroguanosine 5'-triphosphate = cyclic pyranopterin phosphate + diphosphate. It participates in cofactor biosynthesis; molybdopterin biosynthesis. Catalyzes the conversion of (8S)-3',8-cyclo-7,8-dihydroguanosine 5'-triphosphate to cyclic pyranopterin monophosphate (cPMP). The polypeptide is Cyclic pyranopterin monophosphate synthase (Listeria monocytogenes serovar 1/2a (strain ATCC BAA-679 / EGD-e)).